Here is a 150-residue protein sequence, read N- to C-terminus: FAD synthase (150 aa).

ATP-binding positions include Val16–Phe17, His21–His24, and Asp102.

The protein belongs to the archaeal FAD synthase family. In terms of assembly, homodimer. It depends on a divalent metal cation as a cofactor.

It carries out the reaction FMN + ATP + H(+) = FAD + diphosphate. The protein operates within cofactor biosynthesis; FAD biosynthesis; FAD from FMN: step 1/1. Functionally, catalyzes the transfer of the AMP portion of ATP to flavin mononucleotide (FMN) to produce flavin adenine dinucleotide (FAD) coenzyme. The sequence is that of FAD synthase from Thermococcus onnurineus (strain NA1).